Consider the following 718-residue polypeptide: Heme peroxidase 2 (718 aa).

The first 19 residues, 1–19 (MNLKPTILLFTILFLKCAT), serve as a signal peptide directing secretion. A propeptide spanning residues 20 to 146 (FEVNEETERI…QANRRCSSPP (127 aa)) is cleaved from the precursor. 2 disordered regions span residues 41–64 (RASE…ANSD) and 108–144 (LLQS…RCSS). A compositionally biased stretch (polar residues) spans 45–64 (NSESEQTSQHIIVSQQANSD). The span at 109–118 (LQSSETTTTT) shows a compositional bias: low complexity. A compositionally biased stretch (basic residues) spans 126–139 (SKRSAIFRSKRQAN). A disulfide bridge links cysteine 149 with cysteine 164. The active-site Proton acceptor is histidine 241. Aspartate 242 is a binding site for Ca(2+). The cysteines at positions 262 and 272 are disulfide-linked. Ca(2+) contacts are provided by serine 311, phenylalanine 313, aspartate 315, and serine 317. N-linked (GlcNAc...) asparagine glycosylation is present at asparagine 354. Cysteine 358 and cysteine 366 are disulfide-bonded. Histidine 477 contributes to the heme b binding site. 4 N-linked (GlcNAc...) asparagine glycosylation sites follow: asparagine 551, asparagine 592, asparagine 662, and asparagine 673. Residues cysteine 682 and cysteine 705 are joined by a disulfide bond.

The protein belongs to the peroxidase family. Heme b is required as a cofactor. As to expression, expressed in the hypodermis and gland cells of the pharynx. Specifically, there is low and transient expression from the distal bulb of the pharynx to the anterior of the buccal cavity. Whole body expression levels increase upon entry into the dauer phase.

Its subcellular location is the secreted. It carries out the reaction 2 a phenolic donor + H2O2 = 2 a phenolic radical donor + 2 H2O. Functionally, peroxidase which is involved in maintaining the cuticle integrity in the hypodermis and pharynx. It thus plays a role in conferring resistance against Gram-positive bacteria such as E.faecalis, S.aureus and C.diphtheriae, and yeast such as C.albicans. This chain is Heme peroxidase 2, found in Caenorhabditis elegans.